The sequence spans 119 residues: Acidic phospholipase A2 DE-III (119 aa).

7 disulfides stabilise this stretch: Cys-11-Cys-72, Cys-26-Cys-118, Cys-28-Cys-44, Cys-43-Cys-99, Cys-50-Cys-92, Cys-60-Cys-85, and Cys-79-Cys-90. Ca(2+) is bound by residues Tyr-27, Gly-29, and Gly-31. His-47 is a catalytic residue. Asp-48 serves as a coordination point for Ca(2+). Asp-93 is a catalytic residue.

Belongs to the phospholipase A2 family. Group I subfamily. D49 sub-subfamily. It depends on Ca(2+) as a cofactor. In terms of tissue distribution, expressed by the venom gland.

Its subcellular location is the secreted. The catalysed reaction is a 1,2-diacyl-sn-glycero-3-phosphocholine + H2O = a 1-acyl-sn-glycero-3-phosphocholine + a fatty acid + H(+). Its function is as follows. PLA2 catalyzes the calcium-dependent hydrolysis of the 2-acyl groups in 3-sn-phosphoglycerides. This is Acidic phospholipase A2 DE-III from Naja melanoleuca (Forest cobra).